The sequence spans 1503 residues: Translocase of chloroplast 159, chloroplastic (1503 aa).

Polar residues predominate over residues 1–24 (MDSKSVTPEPTNPFYASSGQSGKT). The interval 1 to 210 (MDSKSVTPEP…GGKVDVDDKS (210 aa)) is disordered. The helical transmembrane segment at 21–37 (SGKTYASVVAAAAAAAA) threads the bilayer. Phosphoserine is present on Ser71. Composition is skewed to basic and acidic residues over residues 85-98 (KVSD…KEDS) and 176-210 (SESK…DDKS). Phosphoserine occurs at positions 210, 281, and 288. Disordered stretches follow at residues 298 to 338 (KFTS…DVEK) and 429 to 464 (VHNK…SEGD). A compositionally biased stretch (basic and acidic residues) spans 447–456 (ESDKATEEGG). A phosphoserine mark is found at Ser448, Ser461, Ser589, Ser609, Ser630, Ser632, and Ser665. A disordered region spans residues 610–633 (FGGKEVDQEPSGEGVTRVDGSESE). The stretch at 781-804 (EEEKQKLEKLQSLRVKFLRLLQRL) forms a coiled coil. The AIG1-type G domain occupies 853–1087 (IFSLNILVLG…RPQEPLDHRK (235 aa)). The G1 stretch occupies residues 862–869 (GKAGVGKS). Residues 865–870 (GVGKSA) and 884–889 (DAFGLS) each bind GTP. Ser869 serves as a coordination point for Mg(2+). Positions 884 to 887 (DAFG) are homodimerization. Residues 889–893 (STTSV) are G2. The segment at 909 to 912 (DTPG) is G3. Positions 947–952 (RLDTQT) are homodimerization. The segment at 981–984 (THAA) is G4. GTP is bound by residues His982 and 1035–1036 (EN). The interval 1035–1037 (ENH) is G5. The stretch at 1175 to 1203 (DYRVKLLQKKQWREELKRMKEMKKNGKKL) forms a coiled coil. The interval 1203-1222 (LGESEFGYPGEEDDPENGAP) is disordered.

The protein belongs to the TRAFAC class TrmE-Era-EngA-EngB-Septin-like GTPase superfamily. AIG1/Toc34/Toc159-like paraseptin GTPase family. TOC159 subfamily. As to quaternary structure, homodimer and heterodimer with TOC33. Part of the TOC core complex that includes 1 protein for the specific recognition of transit peptides surrounded by a ring composed of four proteins forming translocation channels, and four to five GTP-binding proteins providing energy. This core complex can interact with components of the TIC complex to form a larger import complex. Chloroplastic protein precursor such as prSS (precursor of the RuBisCO small subunit) interacts with these complexes. The TOC complex contains a specific subset of polar lipids such as digalactosyldiacylglyceride (DGDG), phosphatidylcholine (PC) and phosphatidylglycerol (PG). Interacts with SP1. Mg(2+) serves as cofactor. Post-translationally, phosphorylated by KOC1.

It localises to the plastid. It is found in the chloroplast outer membrane. The protein localises to the cytoplasm. In terms of biological role, GTPase involved in protein precursor import into chloroplasts. Seems to recognize chloroplast-destined precursor proteins and regulate their presentation to the translocation channel through GTP hydrolysis. Required for chloroplast biogenesis. Probably specialized in the import of nuclear encoded photosynthetic preproteins from the cytoplasm to the chloroplast. The sequence is that of Translocase of chloroplast 159, chloroplastic from Arabidopsis thaliana (Mouse-ear cress).